The primary structure comprises 377 residues: NAC domain-containing protein 76 (377 aa).

Residues 10–159 (VPPGFRFHPT…GWVVCRAFKK (150 aa)) enclose the NAC domain. The DNA-binding element occupies 110–165 (IGMRKTLVFYKGRAPNGQKTDWIMHEYRLESDENAPPQEEGWVVCRAFKKKPMTGQ). Positions 312–347 (GVSGFGGHHEEDNNKIGHYNNEESNNKGSVETASST) are disordered. Residues 318-336 (GHHEEDNNKIGHYNNEESN) show a composition bias toward basic and acidic residues. A compositionally biased stretch (polar residues) spans 337–347 (NKGSVETASST).

Belongs to the plant vascular related NAC-domain protein family. As to quaternary structure, interacts with NAC030/VND7. In terms of tissue distribution, detected in root protoxylem and metaxylem poles and in vessels of protoxylems, outermost metaxylems, inner metaxylems, shoots and hypocotyls. Expressed in roots, hypocotyls, cotyledons and leaves. Present in developing xylems. Specifically expressed in vessels but not in interfascicular fibers in stems.

The protein resides in the nucleus. Functionally, transcription activator that binds to the secondary wall NAC binding element (SNBE), 5'-(T/A)NN(C/T)(T/C/G)TNNNNNNNA(A/C)GN(A/C/T)(A/T)-3', in the promoter of target genes. Involved in xylem formation by promoting the expression of secondary wall-associated transcription factors and of genes involved in secondary wall biosynthesis and programmed cell death, genes driven by the secondary wall NAC binding element (SNBE). Triggers thickening of secondary walls. In Arabidopsis thaliana (Mouse-ear cress), this protein is NAC domain-containing protein 76.